The chain runs to 426 residues: MLDSKLLRSNLQDVADRLASRGFALDVARIEALEEQRKTVQTRTEALQAERNARSKSIGQAKQRGEDIAPLMADVERMAGELSAGKVELEAIQTELDSILLGIPNLPHESVPVGEDEDGNVEVRRWGTPTAFDFPVQDHVALGEKFGWLDFETAAKLSGARFALLRGPIARLHRALAQFMINLHVTEHGYEEAYTPYLVQAPALQGTGQLPKFEEDLFKIAREGEADLYLIPTAEVSLTNIVAGEIVDSKQLPIKFVAHTPCFRSEAGASGRDTRGMIRQHQFDKVEMVQIVEPSKSMEALESLTANAEKVLQLLGLPYRTLALCTGDMGFSAVKTYDLEVWIPSQDKYREISSCSNCGDFQARRMQARFRNPETGKPELVHTLNGSGLAVGRTLVAVLENYQQADGSIRVPDVLKPYMGGLEVIG.

L-serine is bound at residue 233 to 235; the sequence is TAE. Residue 264 to 266 coordinates ATP; it reads RSE. Glu-287 serves as a coordination point for L-serine. 351 to 354 lines the ATP pocket; the sequence is EISS. Ser-387 lines the L-serine pocket.

Belongs to the class-II aminoacyl-tRNA synthetase family. Type-1 seryl-tRNA synthetase subfamily. As to quaternary structure, homodimer. The tRNA molecule binds across the dimer.

Its subcellular location is the cytoplasm. It carries out the reaction tRNA(Ser) + L-serine + ATP = L-seryl-tRNA(Ser) + AMP + diphosphate + H(+). The catalysed reaction is tRNA(Sec) + L-serine + ATP = L-seryl-tRNA(Sec) + AMP + diphosphate + H(+). Its pathway is aminoacyl-tRNA biosynthesis; selenocysteinyl-tRNA(Sec) biosynthesis; L-seryl-tRNA(Sec) from L-serine and tRNA(Sec): step 1/1. Catalyzes the attachment of serine to tRNA(Ser). Is also able to aminoacylate tRNA(Sec) with serine, to form the misacylated tRNA L-seryl-tRNA(Sec), which will be further converted into selenocysteinyl-tRNA(Sec). This Pseudomonas fluorescens (strain Pf0-1) protein is Serine--tRNA ligase.